The primary structure comprises 345 residues: Homeobox-leucine zipper protein HOX16 (345 aa).

Positions 76–135 (LPEKKRRLTPEQVHLLERSFEEENKLEPERKTELARKLGLQPRQVAVWFQNRRARWKTKQ) form a DNA-binding region, homeobox. A leucine-zipper region spans residues 134 to 178 (KQLERDFDRLKASFDALRADHDALLQDNHRLHSQVMSLTEKLQEK). The disordered stretch occupies residues 220–241 (FEEQQEQQVKAEDRLSTGSGGS).

The protein belongs to the HD-ZIP homeobox family. Class I subfamily. In terms of tissue distribution, expressed in seedlings, stems, leaf sheaths and blades and panicles.

The protein localises to the nucleus. Probable transcription factor. This chain is Homeobox-leucine zipper protein HOX16 (HOX16), found in Oryza sativa subsp. indica (Rice).